The following is a 604-amino-acid chain: 3-hydroxy-3-methylglutaryl-coenzyme A reductase 2 (604 aa).

Transmembrane regions (helical) follow at residues 47-67 (LPLY…MYFL) and 91-111 (AIVS…IGFV). Residues 112 to 188 (QTFVARGNND…APLVTPAASE (77 aa)) are linker. Asparagine 120 carries N-linked (GlcNAc...) asparagine glycosylation. The interval 189–604 (EDEEIIKSVV…STKDVTKASS (416 aa)) is catalytic. Glutamate 283 serves as the catalytic Charge relay system. A glycan (N-linked (GlcNAc...) asparagine) is linked at asparagine 347. The Charge relay system role is filled by lysine 415. Asparagine 460 carries an N-linked (GlcNAc...) asparagine glycan. The Charge relay system role is filled by aspartate 491. The active-site Proton donor is the histidine 589. Asparagine 593 carries N-linked (GlcNAc...) asparagine glycosylation.

It belongs to the HMG-CoA reductase family.

It is found in the endoplasmic reticulum membrane. It carries out the reaction (R)-mevalonate + 2 NADP(+) + CoA = (3S)-3-hydroxy-3-methylglutaryl-CoA + 2 NADPH + 2 H(+). The protein operates within metabolic intermediate biosynthesis; (R)-mevalonate biosynthesis; (R)-mevalonate from acetyl-CoA: step 3/3. Catalyzes the synthesis of mevalonate. The specific precursor of all isoprenoid compounds present in plants. This is 3-hydroxy-3-methylglutaryl-coenzyme A reductase 2 (HMGR2) from Capsicum annuum (Capsicum pepper).